Consider the following 288-residue polypeptide: ATP synthase gamma chain (288 aa).

It belongs to the ATPase gamma chain family. In terms of assembly, F-type ATPases have 2 components, CF(1) - the catalytic core - and CF(0) - the membrane proton channel. CF(1) has five subunits: alpha(3), beta(3), gamma(1), delta(1), epsilon(1). CF(0) has three main subunits: a, b and c.

It is found in the cell membrane. Functionally, produces ATP from ADP in the presence of a proton gradient across the membrane. The gamma chain is believed to be important in regulating ATPase activity and the flow of protons through the CF(0) complex. This Bacillus pumilus (strain SAFR-032) protein is ATP synthase gamma chain.